Here is a 475-residue protein sequence, read N- to C-terminus: Putative aldehyde dehydrogenase SH0913 (475 aa).

Position 201–207 (201–207 (GDGEGVG)) interacts with NAD(+). Catalysis depends on residues Glu245 and Cys279.

The protein belongs to the aldehyde dehydrogenase family.

The enzyme catalyses an aldehyde + NAD(+) + H2O = a carboxylate + NADH + 2 H(+). In Staphylococcus haemolyticus (strain JCSC1435), this protein is Putative aldehyde dehydrogenase SH0913.